The following is a 582-amino-acid chain: ATP-dependent lipid A-core flippase (582 aa).

Helical transmembrane passes span 15-35, 68-88, 140-160, 161-181, and 254-274; these read LWPI…ALVI, YVVV…SYCL, GALI…AVML, YTSW…AVLI, and VQII…VPTI. An ABC transmembrane type-1 domain is found at 27–310; the sequence is VVSGIALVIN…LTNVNAQFQK (284 aa). The region spanning 342-578 is the ABC transporter domain; sequence LSFKNVTFTY…NGAYKQLHHI (237 aa). 376–383 contributes to the ATP binding site; it reads GRSGSGKS.

It belongs to the ABC transporter superfamily. Lipid exporter (TC 3.A.1.106) family. Homodimer.

The protein resides in the cell inner membrane. The catalysed reaction is ATP + H2O + lipid A-core oligosaccharideSide 1 = ADP + phosphate + lipid A-core oligosaccharideSide 2.. Involved in lipopolysaccharide (LPS) biosynthesis. Translocates lipid A-core from the inner to the outer leaflet of the inner membrane. Transmembrane domains (TMD) form a pore in the inner membrane and the ATP-binding domain (NBD) is responsible for energy generation. This chain is ATP-dependent lipid A-core flippase, found in Pasteurella multocida (strain Pm70).